We begin with the raw amino-acid sequence, 107 residues long: Iron-binding protein IscA (107 aa).

The Fe cation site is built by Cys-35, Cys-99, and Cys-101.

It belongs to the HesB/IscA family. As to quaternary structure, homodimer; may form tetramers and higher multimers. Fe cation serves as cofactor.

In terms of biological role, is able to transfer iron-sulfur clusters to apo-ferredoxin. Multiple cycles of [2Fe2S] cluster formation and transfer are observed, suggesting that IscA acts catalytically. Recruits intracellular free iron so as to provide iron for the assembly of transient iron-sulfur cluster in IscU in the presence of IscS, L-cysteine and the thioredoxin reductase system TrxA/TrxB. This Xenorhabdus nematophila (strain ATCC 19061 / DSM 3370 / CCUG 14189 / LMG 1036 / NCIMB 9965 / AN6) protein is Iron-binding protein IscA.